Here is a 92-residue protein sequence, read N- to C-terminus: Defensin-like protein 249 (92 aa).

The N-terminal stretch at 1 to 24 (MKLAAIFLASSVLLSLLPIHLSQG) is a signal peptide. 4 cysteine pairs are disulfide-bonded: Cys-34–Cys-91, Cys-45–Cys-74, Cys-53–Cys-84, and Cys-72–Cys-86.

This sequence belongs to the DEFL family.

The protein resides in the secreted. The chain is Defensin-like protein 249 (SCRL7) from Arabidopsis thaliana (Mouse-ear cress).